We begin with the raw amino-acid sequence, 429 residues long: GTPase Obg (429 aa).

One can recognise an Obg domain in the interval 1–158; that stretch reads MLIDKCTLFL…IEAQFELKYI (158 aa). The OBG-type G domain occupies 159 to 330; it reads ADVGLLGLPN…LLKDIFKDYK (172 aa). GTP is bound by residues 165-172, 190-194, 211-214, 281-284, and 311-313; these read GLPNAGKS, FTTLS, DIPG, NKID, and SGF. Residues S172 and T192 each coordinate Mg(2+). Positions 351-429 constitute an OCT domain; sequence KVEKEQEDIV…RIQDVMFEIN (79 aa).

Belongs to the TRAFAC class OBG-HflX-like GTPase superfamily. OBG GTPase family. As to quaternary structure, monomer. It depends on Mg(2+) as a cofactor.

It is found in the cytoplasm. In terms of biological role, an essential GTPase which binds GTP, GDP and possibly (p)ppGpp with moderate affinity, with high nucleotide exchange rates and a fairly low GTP hydrolysis rate. Plays a role in control of the cell cycle, stress response, ribosome biogenesis and in those bacteria that undergo differentiation, in morphogenesis control. In Malacoplasma penetrans (strain HF-2) (Mycoplasma penetrans), this protein is GTPase Obg.